The chain runs to 61 residues: Aerolysin regulatory protein (61 aa).

Basic residues predominate over residues 1–14 (MMIKRHLPQPRHRE). The disordered stretch occupies residues 1–61 (MMIKRHLPQP…GQTHTGPQIR (61 aa)). The span at 51–61 (DGQTHTGPQIR) shows a compositional bias: polar residues.

Functionally, regulation of the expression of aerolysin. The protein is Aerolysin regulatory protein (aerC) of Aeromonas sobria.